The chain runs to 219 residues: Probable nicotinate-nucleotide adenylyltransferase (219 aa).

The protein belongs to the NadD family.

It carries out the reaction nicotinate beta-D-ribonucleotide + ATP + H(+) = deamido-NAD(+) + diphosphate. It functions in the pathway cofactor biosynthesis; NAD(+) biosynthesis; deamido-NAD(+) from nicotinate D-ribonucleotide: step 1/1. Its function is as follows. Catalyzes the reversible adenylation of nicotinate mononucleotide (NaMN) to nicotinic acid adenine dinucleotide (NaAD). This chain is Probable nicotinate-nucleotide adenylyltransferase, found in Pseudomonas putida (strain GB-1).